We begin with the raw amino-acid sequence, 156 residues long: Cyanate hydratase (156 aa).

Catalysis depends on residues arginine 96, glutamate 99, and serine 122.

This sequence belongs to the cyanase family.

The catalysed reaction is cyanate + hydrogencarbonate + 3 H(+) = NH4(+) + 2 CO2. In terms of biological role, catalyzes the reaction of cyanate with bicarbonate to produce ammonia and carbon dioxide. In Burkholderia pseudomallei (strain 1106a), this protein is Cyanate hydratase.